The primary structure comprises 131 residues: Sirohydrochlorin cobaltochelatase (131 aa).

Histidine 12 serves as the catalytic Proton acceptor. Residues histidine 12 and histidine 78 each contribute to the Co(2+) site. Positions 12 and 78 each coordinate Ni(2+). Residue 73-78 participates in substrate binding; sequence LASGVH.

This sequence belongs to the CbiX family. CbiXS subfamily. As to quaternary structure, homotetramer; dimer of dimers.

The catalysed reaction is Co-sirohydrochlorin + 2 H(+) = sirohydrochlorin + Co(2+). It carries out the reaction Ni-sirohydrochlorin + 2 H(+) = sirohydrochlorin + Ni(2+). Its pathway is cofactor biosynthesis; adenosylcobalamin biosynthesis; cob(II)yrinate a,c-diamide from sirohydrochlorin (anaerobic route): step 1/10. Its function is as follows. Catalyzes the insertion of Co(2+) into sirohydrochlorin as part of the anaerobic pathway to cobalamin biosynthesis. Involved in the biosynthesis of the unique nickel-containing tetrapyrrole coenzyme F430, the prosthetic group of methyl-coenzyme M reductase (MCR), which plays a key role in methanogenesis and anaerobic methane oxidation. Catalyzes the insertion of Ni(2+) into sirohydrochlorin to yield Ni-sirohydrochlorin. This chain is Sirohydrochlorin cobaltochelatase, found in Methanococcoides burtonii (strain DSM 6242 / NBRC 107633 / OCM 468 / ACE-M).